An 87-amino-acid polypeptide reads, in one-letter code: Cell division protein FtsL (87 aa).

Over 1–3 (MSR) the chain is Cytoplasmic. Residues 4–23 (LLLIVLLACSIASAIGVVYM) form a helical membrane-spanning segment. Residues 24–87 (RHMHRKLFVQ…ETSDIVVIRP (64 aa)) are Periplasmic-facing.

Belongs to the FtsL family. Part of a complex composed of FtsB, FtsL and FtsQ.

It localises to the cell inner membrane. In terms of biological role, essential cell division protein. May link together the upstream cell division proteins, which are predominantly cytoplasmic, with the downstream cell division proteins, which are predominantly periplasmic. The chain is Cell division protein FtsL from Xanthomonas campestris pv. campestris (strain ATCC 33913 / DSM 3586 / NCPPB 528 / LMG 568 / P 25).